A 448-amino-acid polypeptide reads, in one-letter code: uncharacterized protein (448 aa).

In terms of tissue distribution, component of the acid-insoluble and acid-soluble organic matrix of the aragonitic skeleton (at protein level).

It localises to the secreted. This is an uncharacterized protein from Acropora millepora (Staghorn coral).